The primary structure comprises 879 residues: Aminopeptidase M1 (879 aa).

The tract at residues His-98–Val-205 is required for membrane association. Substrate contacts are provided by residues Glu-138 and Gly-271–Asn-275. His-307 contacts Zn(2+). Glu-308 functions as the Proton acceptor in the catalytic mechanism. Residues His-311 and Glu-330 each contribute to the Zn(2+) site. The short motif at Leu-728–Leu-729 is the Dileucine internalization motif element.

This sequence belongs to the peptidase M1 family. In terms of assembly, homodimer. Interacts with N-1-naphthylphthalamic acid (NPA). The cofactor is Zn(2+). In terms of tissue distribution, ubiquitous with preferential expression in 5 days-old seedlings, roots, young flowers, upper inflorescence stems, and rosette leaves.

The protein resides in the membrane. The protein localises to the microsome membrane. It localises to the cytoplasm. The enzyme catalyses Release of an N-terminal amino acid, Xaa-|-Yaa- from a peptide, amide or arylamide. Xaa is preferably Ala, but may be most amino acids including Pro (slow action). When a terminal hydrophobic residue is followed by a prolyl residue, the two may be released as an intact Xaa-Pro dipeptide.. Metallopeptidase that binds to the auxin transport inhibitor N-1-naphthylphthalamic acid (NPA). Required for embryonic and seedling development as well as cell cycle progression. Homodimerization is required to proper localization and activity. May play a negative role in the regulation of PIN auxin transport proteins. This is Aminopeptidase M1 (APM1) from Arabidopsis thaliana (Mouse-ear cress).